Here is a 411-residue protein sequence, read N- to C-terminus: Corticotropin-releasing factor receptor 2 (411 aa).

Residues 1–19 constitute a signal peptide (not cleaved); it reads MDAALLLSLLEANCSLALA. Over 1-108 the chain is Extracellular; it reads MDAALLLSLL…EPILDDKQRK (108 aa). N-linked (GlcNAc...) asparagine glycans are attached at residues asparagine 13, asparagine 41, asparagine 74, asparagine 86, and asparagine 94. Cystine bridges form between cysteine 14-cysteine 50, cysteine 40-cysteine 83, and cysteine 64-cysteine 98. Residues 109-139 traverse the membrane as a helical segment; sequence YDLHYRIALIINYLGHCVSVVALVAAFLLFL. Residues 140-146 are Cytoplasmic-facing; sequence VLRSIRC. Residues 147–171 form a helical membrane-spanning segment; that stretch reads LRNVIHWNLITTFILRNITWFLLQL. Over 172-185 the chain is Extracellular; sequence IDHEVHEGNEVWCR. Cysteine 184 and cysteine 254 are joined by a disulfide. A helical transmembrane segment spans residues 186–214; the sequence is CVTTIFNYFVVTNFFWMFVEGCYLHTAIV. Residues 215–221 are Cytoplasmic-facing; it reads MTYSTEH. A helical membrane pass occupies residues 222–249; that stretch reads LRKWLFLFIGWCIPCPIIVAWAVGKLYY. The Extracellular segment spans residues 250–265; that stretch reads ENEQCWFGKEPGDLVD. A helical membrane pass occupies residues 266–291; it reads YIYQGPIILVLLINFVFLFNIVRILM. Residues 292–302 lie on the Cytoplasmic side of the membrane; that stretch reads TKLRASTTSET. The chain crosses the membrane as a helical span at residues 303 to 327; that stretch reads IQYRKAVKATLVLLPLLGITYMLFF. Residues 328 to 334 are Extracellular-facing; sequence VNPGEDD. Residues 335 to 364 traverse the membrane as a helical segment; that stretch reads LSQIVFIYFNSFLQSFQGFFVSVFYCFFNG. Over 365–411 the chain is Cytoplasmic; that stretch reads EVRSALRKRWHRWQDHHALRVPVARAMSIPTSPTRISFHSIKQTAAV.

The protein belongs to the G-protein coupled receptor 2 family. As to quaternary structure, monomer. Interacts (via N-terminal extracellular domain) with CRF, UCN, UCN2 and UCN3. In terms of processing, a N-glycosylation site within the signal peptide impedes its proper cleavage and function. Predominantly expressed in limbic regions of the brain such as the lateral septum, the entorhinal cortex, the hypothalamic ventromedial nucleus and several amygdaloid nuclei. Also detectable in lung, kidney and heart.

It localises to the cell membrane. In terms of biological role, G-protein coupled receptor for CRH (corticotropin-releasing factor), UCN (urocortin), UCN2 and UCN3. Has high affinity for UCN. Ligand binding causes a conformation change that triggers signaling via guanine nucleotide-binding proteins (G proteins) and down-stream effectors, such as adenylate cyclase. Promotes the activation of adenylate cyclase, leading to increased intracellular cAMP levels. This is Corticotropin-releasing factor receptor 2 (Crhr2) from Rattus norvegicus (Rat).